We begin with the raw amino-acid sequence, 217 residues long: Glutathione S-transferase 1 (217 aa).

One can recognise a GST N-terminal domain in the interval 1–83; that stretch reads MVMTLYKLDA…YLVSKYGADD (83 aa). Residues Ser11, 53-55, and 67-69 contribute to the glutathione site; these read HTV and DSH. Residues 89 to 211 form the GST C-terminal domain; sequence DPKKRAIVDQ…APGNDLCKDL (123 aa).

Belongs to the GST superfamily. Theta family. As to quaternary structure, homodimer.

The enzyme catalyses RX + glutathione = an S-substituted glutathione + a halide anion + H(+). In terms of biological role, conjugation of reduced glutathione to a wide number of exogenous and endogenous hydrophobic electrophiles. The polypeptide is Glutathione S-transferase 1 (GST1) (Manduca sexta (Tobacco hawkmoth)).